The following is an 89-amino-acid chain: Cell division topological specificity factor (89 aa).

The protein belongs to the MinE family.

Its function is as follows. Prevents the cell division inhibition by proteins MinC and MinD at internal division sites while permitting inhibition at polar sites. This ensures cell division at the proper site by restricting the formation of a division septum at the midpoint of the long axis of the cell. The chain is Cell division topological specificity factor from Sodalis glossinidius (strain morsitans).